A 4095-amino-acid polypeptide reads, in one-letter code: Protein adenylyltransferase and cysteine protease IbpA (4095 aa).

The N-terminal stretch at 1-97 (MNKNCYKLIF…MVAAPNFAQS (97 aa)) is a signal peptide. 2 binds bovine IgG2 Fc regions span residues 972-1515 (SERI…FVKA) and 1116-1255 (SEVQ…FLKE). 5 disordered regions span residues 1082–1117 (EVSD…LPSE), 1130–1154 (KEKA…LQSD), 1204–1223 (QEAL…AKAK), 1625–1652 (TVSH…TGFT), and 1705–1732 (EEDE…QKEE). A compositionally biased stretch (acidic residues) spans 1087 to 1096 (WERDPDEPDE). Composition is skewed to basic and acidic residues over residues 1097–1117 (PDYK…LPSE) and 1130–1139 (KEKAQQKRQA). A coiled-coil region spans residues 1116 to 1247 (SEVQDKLRQK…AKDHQIEEAL (132 aa)). Low complexity predominate over residues 1716 to 1727 (KAKAAPDATDNA). 12 consecutive repeat copies span residues 2250-2271 (YSTL…SDDI), 2272-2295 (YSLL…AEGA), 2296-2317 (YDLL…SDDL), 2318-2343 (YSTV…AAGP), 2344-2365 (YSLL…GEGP), 2366-2387 (YSLL…SNST), 2388-2413 (YSTV…VAGP), 2414-2435 (YSLL…GEGP), 2436-2457 (YSLL…SDSP), 2458-2483 (YSTV…VAGP), 2484-2505 (YSLL…GEGP), and 2506-2527 (YSLL…SDSP). The interval 2250 to 2527 (YSTLGDQNAN…RTLGGESDSP (278 aa)) is 12 X 22 AA approximate repeats. Composition is skewed to polar residues over residues 2592 to 2611 (SDTE…TRNA) and 2794 to 2803 (TAPQKTSPVK). Disordered regions lie at residues 2592-2617 (SDTE…PLPP), 2765-2809 (TIGE…SAEG), 2825-2894 (AKGQ…SPKR), 2914-2933 (LKSK…EPIY), 2943-3033 (LARA…KSED), and 3049-3069 (NKSQ…PNYD). Over residues 2880 to 2889 (PFPSEFSSEP) the composition is skewed to low complexity. Polar residues-rich tracts occupy residues 2977 to 2996 (SNLS…QSVA) and 3005 to 3018 (AESN…QKLQ). Residues 3052–3062 (QAKEAKSEQET) are compositionally biased toward basic and acidic residues. The Fido 1 domain maps to 3218-3355 (LTVEMIEKLN…AEVVKEFLTE (138 aa)). Residues 3222–4095 (MIEKLNHGLR…FNVVNYKKNN (874 aa)) form a yopT-like region. The tract at residues 3354-3698 (TELGKKSSPQ…VDFINRAKNE (345 aa)) is binds bovine IgG2 Fc. 2 disordered regions span residues 3357 to 3415 (GKKS…PSVP) and 3432 to 3454 (AELK…ATGV). 2 stretches are compositionally biased toward polar residues: residues 3360–3379 (SSPQ…SPVT) and 3388–3401 (VENT…TIKQ). The segment covering 3443–3454 (KAAEKSEGATGV) has biased composition (basic and acidic residues). An arm region region spans residues 3535-3557 (IPEATVKQMSHLPEFDDILTEGA). The Fido 2 domain occupies 3640–3777 (LTVQMIENLN…SEVVVEFLKE (138 aa)). Residues 3670–3671 (KE), 3722–3724 (GNG), Arg3728, and Gln3757 contribute to the ATP site. A compositionally biased stretch (basic and acidic residues) spans 3783–3798 (SKEDNEQNLEKTDRTS). The tract at residues 3783–3829 (SKEDNEQNLEKTDRTSTDLTESAVENSAALSSGTVRSATVSETVTET) is disordered. Residues 3799–3815 (TDLTESAVENSAALSSG) show a composition bias toward polar residues. Over residues 3816–3829 (TVRSATVSETVTET) the composition is skewed to low complexity. Catalysis depends on for cysteine protease activity residues Cys3910, His4033, and Asp4048.

The protein in the central section; belongs to the fic family. It in the C-terminal section; belongs to the peptidase C58 family. As to quaternary structure, immunoglobulin-binding protein. In terms of processing, the long form of the protein is probably processed, and/or the transcript may be subject to differential translational initiation.

It is found in the secreted. The protein resides in the cell outer membrane. It catalyses the reaction L-tyrosyl-[protein] + ATP = O-(5'-adenylyl)-L-tyrosyl-[protein] + diphosphate. The catalysed reaction is L-threonyl-[protein] + ATP = 3-O-(5'-adenylyl)-L-threonyl-[protein] + diphosphate. In terms of biological role, adenylyltransferase involved in virulence by mediating the addition of adenosine 5'-monophosphate (AMP) to specific tyrosine residue of host Rho GTPases RhoA, Rac and Cdc42. The resulting AMPylation inactivates Rho GTPases, thereby inhibiting actin assembly in infected cells. Probably also acts as a cysteine protease, which may play a central role after invasion of host cell and in virulence. Possible member (with IbpB) of a 2 partner secretion. Probably able to bind bovine epithelial cells (host cells). May participate in the formation of fibrils at the surface of the bacteria. This Histophilus somni (strain 2336) (Haemophilus somnus) protein is Protein adenylyltransferase and cysteine protease IbpA (ibpA).